The following is a 139-amino-acid chain: Bilirubin-inducible fluorescent protein UnaG (139 aa).

Residues Asn-57, Thr-61, Ser-80, Arg-112, and 132 to 134 contribute to the (4Z,15Z)-bilirubin IXalpha site; that span reads RSY.

Belongs to the calycin superfamily. Fatty-acid binding protein (FABP) family. In terms of assembly, monomer. In terms of tissue distribution, detected in small-diameter muscle fibers from the white muscle layer from juvenile animals (glass eels) (at protein level). Detected in small-diameter muscle fibers from juvenile animals (glass eels).

The protein resides in the cytoplasm. Beta-barrel protein that binds unconjugated bilirubin with high affinity. Excitation of the bilirubin-bound protein gives rise to green fluorescence, both under normoxia and hypoxia. The apoprotein is not fluorescent. Does not emit fluorescence in the presence of ditauro-bilirubin, urobilin or biliverdin. This is Bilirubin-inducible fluorescent protein UnaG from Anguilla japonica (Japanese eel).